The chain runs to 130 residues: Small ribosomal subunit protein uS9 (130 aa).

It belongs to the universal ribosomal protein uS9 family.

The sequence is that of Small ribosomal subunit protein uS9 from Desulfovibrio desulfuricans (strain ATCC 27774 / DSM 6949 / MB).